The primary structure comprises 159 residues: Nucleoside diphosphate kinase (159 aa).

Lys-13, Phe-61, Arg-89, Thr-95, Arg-106, and Asn-116 together coordinate ATP. Catalysis depends on His-119, which acts as the Pros-phosphohistidine intermediate.

This sequence belongs to the NDK family. Requires Mg(2+) as cofactor.

It is found in the cytoplasm. It carries out the reaction a 2'-deoxyribonucleoside 5'-diphosphate + ATP = a 2'-deoxyribonucleoside 5'-triphosphate + ADP. The catalysed reaction is a ribonucleoside 5'-diphosphate + ATP = a ribonucleoside 5'-triphosphate + ADP. Its function is as follows. Major role in the synthesis of nucleoside triphosphates other than ATP. The ATP gamma phosphate is transferred to the NDP beta phosphate via a ping-pong mechanism, using a phosphorylated active-site intermediate. This Halorubrum lacusprofundi (strain ATCC 49239 / DSM 5036 / JCM 8891 / ACAM 34) protein is Nucleoside diphosphate kinase.